A 296-amino-acid polypeptide reads, in one-letter code: Sulfotransferase 1B1 (296 aa).

48–53 (KSGTTW) provides a ligand contact to 3'-phosphoadenylyl sulfate. 107–109 (KTH) contacts substrate. Catalysis depends on His-109, which acts as the Proton acceptor. Residues Arg-131, Ser-139, Tyr-194, 228 to 233 (TSFEMM), and 258 to 260 (RKG) each bind 3'-phosphoadenylyl sulfate.

It belongs to the sulfotransferase 1 family. As to expression, expressed highly in the colon, kidney and small intestine of male and female dogs. Highly expressed in the jejunum and ileum of the male dog than the female dog, which displayed more expression in duodenum (at protein level).

It is found in the cytoplasm. The catalysed reaction is a phenol + 3'-phosphoadenylyl sulfate = an aryl sulfate + adenosine 3',5'-bisphosphate + H(+). It catalyses the reaction 3,3',5-triiodo-L-thyronine + 3'-phosphoadenylyl sulfate = 3,3',5-triiodo-L-thyronine sulfate + adenosine 3',5'-bisphosphate + H(+). It carries out the reaction 3,3',5'-triiodo-L-thyronine + 3'-phosphoadenylyl sulfate = 3,3',5'-triiodo-L-thyronine sulfate + adenosine 3',5'-bisphosphate + H(+). The enzyme catalyses 3,3'-diiodo-L-thyronine + 3'-phosphoadenylyl sulfate = 3,3'-diiodo-L-thyronine sulfate + adenosine 3',5'-bisphosphate + H(+). The catalysed reaction is 4-ethylphenol + 3'-phosphoadenylyl sulfate = 4-ethylphenyl sulfate + adenosine 3',5'-bisphosphate + H(+). In terms of biological role, sulfotransferase that utilizes 3'-phospho-5'-adenylyl sulfate (PAPS) as sulfonate donor to catalyze the sulfate conjugation of dopamine, small phenols such as 1-naphthol and p-nitrophenol and thyroid hormones, including 3,3'-diiodothyronine, triidothyronine (T3) and reverse triiodothyronine (rT3). May play a role in gut microbiota-host metabolic interaction. O-sulfonates 4-ethylphenol (4-EP), a dietary tyrosine-derived metabolite produced by gut bacteria. The product 4-EPS crosses the blood-brain barrier and may negatively regulate oligodendrocyte maturation and myelination, affecting the functional connectivity of different brain regions associated with the limbic system. The chain is Sulfotransferase 1B1 (SULT1B1) from Canis lupus familiaris (Dog).